A 218-amino-acid chain; its full sequence is NAD(P)H-hydrate epimerase (218 aa).

Residues Met-9–Arg-215 enclose the YjeF N-terminal domain. Position 55–59 (Asn-55–Asp-59) interacts with (6S)-NADPHX. Residues Asn-56 and Asp-127 each coordinate K(+). Residues Gly-131–Thr-137 and Asp-160 each bind (6S)-NADPHX. Ser-163 contributes to the K(+) binding site.

Belongs to the NnrE/AIBP family. K(+) serves as cofactor.

The catalysed reaction is (6R)-NADHX = (6S)-NADHX. It carries out the reaction (6R)-NADPHX = (6S)-NADPHX. In terms of biological role, catalyzes the epimerization of the S- and R-forms of NAD(P)HX, a damaged form of NAD(P)H that is a result of enzymatic or heat-dependent hydration. This is a prerequisite for the S-specific NAD(P)H-hydrate dehydratase to allow the repair of both epimers of NAD(P)HX. This chain is NAD(P)H-hydrate epimerase, found in Anaerococcus prevotii (strain ATCC 9321 / DSM 20548 / JCM 6508 / NCTC 11806 / PC1) (Peptostreptococcus prevotii).